The following is a 393-amino-acid chain: Ribonuclease D (393 aa).

A 3'-5' exonuclease domain is found at 14 to 181 (LITTTEDLTG…VYQLLLERLE (168 aa)). The HRDC domain maps to 219–300 (NRRMLGVLRA…AAARALPDGA (82 aa)).

This sequence belongs to the RNase D family. Requires a divalent metal cation as cofactor.

The protein localises to the cytoplasm. It catalyses the reaction Exonucleolytic cleavage that removes extra residues from the 3'-terminus of tRNA to produce 5'-mononucleotides.. Exonuclease involved in the 3' processing of various precursor tRNAs. Initiates hydrolysis at the 3'-terminus of an RNA molecule and releases 5'-mononucleotides. This chain is Ribonuclease D, found in Gluconacetobacter diazotrophicus (strain ATCC 49037 / DSM 5601 / CCUG 37298 / CIP 103539 / LMG 7603 / PAl5).